A 433-amino-acid chain; its full sequence is Voltage-gated potassium channel regulatory subunit KCNG3 (433 aa).

The Cytoplasmic segment spans residues 1–165 (MTFGRGGAAS…RTFEEPTSSL (165 aa)). A helical transmembrane segment spans residues 166 to 187 (AAQILASVSVVFVIVSMVVLCA). The Extracellular segment spans residues 188–217 (STLPDWRAAVADNRSLDDRSRYSASPGREP). A helical transmembrane segment spans residues 218–239 (SGIIEAICIGWFTAECIVRFIV). The Cytoplasmic segment spans residues 240–250 (SKNKCEFVKRP). Residues 251–271 (LNIIDLLAITPYYISVLMTVF) form a helical membrane-spanning segment. Over 272–281 (TGENSQLQRA) the chain is Extracellular. Residues 282-302 (GVTLRVLRMMRIFWVIKLARH) form a helical; Voltage-sensor membrane-spanning segment. Over 303 to 317 (FIGLQTLGLTLKRCY) the chain is Cytoplasmic. A helical transmembrane segment spans residues 318–339 (REMAMLLVFICVAMAIFSALSQ). The Extracellular portion of the chain corresponds to 340–357 (LLEHGLDLETSNKDFASI). An intramembrane region (helical) is located at residues 358–369 (PAACWWVIISMT). Residues 370–375 (TVGYGD) carry the Selectivity filter motif. An intramembrane segment occupies 370-377 (TVGYGDMY). The Extracellular segment spans residues 378–384 (PITVPGR). A helical membrane pass occupies residues 385–413 (ILGGVCVVSGIVLLALPITFIYHSFVQCY). The Cytoplasmic portion of the chain corresponds to 414 to 433 (HELKFRSARYSRSLSAEFLN).

The protein belongs to the potassium channel family. G (TC 1.A.1.2) subfamily. Kv6.3/KCNG3 sub-subfamily. Heterotetramer with KCNB1. Does not form homomultimers.

The protein resides in the cell membrane. The protein localises to the cytoplasm. In terms of biological role, regulatory subunit of the voltage-gated potassium (Kv) channel which, when coassembled with KCNB1, modulates the kinetics parameters of the heterotetrameric channel namely the inactivation and deactivation rate. Potassium channel subunit that does not form functional channels by itself. Reduces the deactivation rate. Moderately acceleratee activation. The protein is Voltage-gated potassium channel regulatory subunit KCNG3 of Mus musculus (Mouse).